The sequence spans 206 residues: MARYLGPKLKMSRRENIDLFLKSGVRAIDSKCKIEQPPGQHGARKPRLSDYGLQLREKQKVRRIYGILERQFRNYYQEAARLKGNTGESLLQLLESRLDNVVYRMGFGATRAESRQLVSHKAIMVNNHIVNIASYQVAINDKISIRDKAKKQSRIRASLELAEQREKPTWLEVDIVKMEGIFKKIPERIHLSAHINEHMIVELYSK.

Positions 96–168 (SRLDNVVYRM…LELAEQREKP (73 aa)) constitute an S4 RNA-binding domain.

The protein belongs to the universal ribosomal protein uS4 family. As to quaternary structure, part of the 30S ribosomal subunit. Contacts protein S5. The interaction surface between S4 and S5 is involved in control of translational fidelity.

In terms of biological role, one of the primary rRNA binding proteins, it binds directly to 16S rRNA where it nucleates assembly of the body of the 30S subunit. Functionally, with S5 and S12 plays an important role in translational accuracy. This Baumannia cicadellinicola subsp. Homalodisca coagulata protein is Small ribosomal subunit protein uS4.